Here is a 297-residue protein sequence, read N- to C-terminus: 33 kDa chaperonin (297 aa).

Intrachain disulfides connect cysteine 239-cysteine 241 and cysteine 272-cysteine 275.

This sequence belongs to the HSP33 family. Under oxidizing conditions two disulfide bonds are formed involving the reactive cysteines. Under reducing conditions zinc is bound to the reactive cysteines and the protein is inactive.

The protein localises to the cytoplasm. In terms of biological role, redox regulated molecular chaperone. Protects both thermally unfolding and oxidatively damaged proteins from irreversible aggregation. Plays an important role in the bacterial defense system toward oxidative stress. The chain is 33 kDa chaperonin from Clostridium acetobutylicum (strain ATCC 824 / DSM 792 / JCM 1419 / IAM 19013 / LMG 5710 / NBRC 13948 / NRRL B-527 / VKM B-1787 / 2291 / W).